A 993-amino-acid chain; its full sequence is Nisin biosynthesis protein NisB (993 aa).

A helical membrane pass occupies residues 838–851; that stretch reads AIFCADSKIIPNLL.

The protein to B.subtilis SpaB and S.epidermidis EpiB.

It localises to the cell membrane. In terms of biological role, involved in the post-translational modification of the lantibiotic nisin. The protein is Nisin biosynthesis protein NisB (nisB) of Lactococcus lactis subsp. lactis (Streptococcus lactis).